The chain runs to 371 residues: Nicotinate-nucleotide pyrophosphorylase [carboxylating], chloroplastic (371 aa).

A chloroplast-targeting transit peptide spans 1–48; sequence MPAAAAAAAPPNPNVLQLAPRLRGLVSFPSSYSSSSPFSNRLRLRLPR. Substrate-binding positions include R162, 193 to 195, R217, K227, E260, D287, 319 to 321, and 340 to 342; these read TRK, SGN, and SGA.

This sequence belongs to the NadC/ModD family.

The protein localises to the plastid. The protein resides in the chloroplast. It catalyses the reaction nicotinate beta-D-ribonucleotide + CO2 + diphosphate = quinolinate + 5-phospho-alpha-D-ribose 1-diphosphate + 2 H(+). Its pathway is cofactor biosynthesis; NAD(+) biosynthesis; nicotinate D-ribonucleotide from quinolinate: step 1/1. Involved in the catabolism of quinolinic acid (QA). The chain is Nicotinate-nucleotide pyrophosphorylase [carboxylating], chloroplastic from Oryza sativa subsp. japonica (Rice).